Here is a 318-residue protein sequence, read N- to C-terminus: L-lactate dehydrogenase (318 aa).

NAD(+) contacts are provided by residues V20, D41, K46, Y71, and 85–86 (GA). Substrate contacts are provided by residues Q88, R94, and 126–129 (NPVD). NAD(+) contacts are provided by residues 124 to 126 (ATN) and S149. 154–157 (DTAR) serves as a coordination point for substrate. R159 and H174 together coordinate beta-D-fructose 1,6-bisphosphate. Residue H181 is the Proton acceptor of the active site. Residue Y226 is modified to Phosphotyrosine. A substrate-binding site is contributed by T235.

It belongs to the LDH/MDH superfamily. LDH family. In terms of assembly, homotetramer.

The protein localises to the cytoplasm. The enzyme catalyses (S)-lactate + NAD(+) = pyruvate + NADH + H(+). The protein operates within fermentation; pyruvate fermentation to lactate; (S)-lactate from pyruvate: step 1/1. Allosterically activated by fructose 1,6-bisphosphate (FBP). In terms of biological role, catalyzes the conversion of lactate to pyruvate. The sequence is that of L-lactate dehydrogenase from Priestia megaterium (Bacillus megaterium).